Consider the following 308-residue polypeptide: Glutaminase 1 (308 aa).

Substrate-binding residues include serine 64, asparagine 116, glutamate 161, asparagine 168, tyrosine 192, tyrosine 244, and valine 262.

The protein belongs to the glutaminase family. Homotetramer.

It carries out the reaction L-glutamine + H2O = L-glutamate + NH4(+). In Halalkalibacterium halodurans (strain ATCC BAA-125 / DSM 18197 / FERM 7344 / JCM 9153 / C-125) (Bacillus halodurans), this protein is Glutaminase 1.